Reading from the N-terminus, the 137-residue chain is ATP synthase epsilon chain, chloroplastic (137 aa).

It belongs to the ATPase epsilon chain family. In terms of assembly, F-type ATPases have 2 components, CF(1) - the catalytic core - and CF(0) - the membrane proton channel. CF(1) has five subunits: alpha(3), beta(3), gamma(1), delta(1), epsilon(1). CF(0) has three main subunits: a, b and c.

The protein resides in the plastid. It localises to the chloroplast thylakoid membrane. Its function is as follows. Produces ATP from ADP in the presence of a proton gradient across the membrane. The protein is ATP synthase epsilon chain, chloroplastic of Oryza nivara (Indian wild rice).